We begin with the raw amino-acid sequence, 205 residues long: Thymidine kinase (205 aa).

ATP contacts are provided by residues 9 to 16 (SAMNAGKS) and 87 to 90 (DECQ). Residue E88 is the Proton acceptor of the active site. C145, C147, C182, and H185 together coordinate Zn(2+).

Belongs to the thymidine kinase family. In terms of assembly, homotetramer.

It localises to the cytoplasm. It carries out the reaction thymidine + ATP = dTMP + ADP + H(+). The sequence is that of Thymidine kinase from Shigella dysenteriae serotype 1 (strain Sd197).